A 2009-amino-acid chain; its full sequence is Sodium channel protein type 1 subunit alpha (2009 aa).

Topologically, residues 1 to 128 (MEQTVLVPPG…KIAIKILVHS (128 aa)) are cytoplasmic. Over residues 28-48 (RIAEEKAKNPKPDKKDDDENG) the composition is skewed to basic and acidic residues. Positions 28 to 60 (RIAEEKAKNPKPDKKDDDENGPKPNSDLEAGKN) are disordered. Residues 110 to 454 (ILTPFNPLRK…QQMIEQLKKQ (345 aa)) form an I repeat. A helical membrane pass occupies residues 129–146 (LFSMLIMCTILTNCVFMT). Residues 147–152 (MSNPPD) lie on the Extracellular side of the membrane. A helical transmembrane segment spans residues 153 to 177 (WTKNVEYTFTGIYTFESLIKIIARG). Residues 178–188 (FCLEDFTFLRD) lie on the Cytoplasmic side of the membrane. Residues 189 to 205 (PWNWLDFTVITFAYVTE) form a helical membrane-spanning segment. The Extracellular segment spans residues 206–213 (FVDLGNVS). The N-linked (GlcNAc...) asparagine glycan is linked to Asn-211. The chain crosses the membrane as a helical span at residues 214–235 (ALRTFRVLRALKTISVIPGLKT). Topologically, residues 236-245 (IVGALIQSVK) are cytoplasmic. The helical transmembrane segment at 246-269 (KLSDVMILTVFCLSVFALIGLQLF) threads the bilayer. Residues 270-369 (MGNLRNKCIQ…YGYTSFDTFS (100 aa)) lie on the Extracellular side of the membrane. 2 disulfides stabilise this stretch: Cys-277-Cys-345 and Cys-336-Cys-351. Asn-284, Asn-295, Asn-301, Asn-306, and Asn-338 each carry an N-linked (GlcNAc...) asparagine glycan. Residues 370–384 (WAFLSLFRLMTQDFW) constitute an intramembrane region (pore-forming). At 385 to 397 (ENLYQLTLRAAGK) the chain is on the extracellular side. Residues 398–423 (TYMIFFVLVIFLGSFYLINLILAVVA) traverse the membrane as a helical segment. Over 424 to 768 (MAYEEQNQAT…HVVNLVVMDP (345 aa)) the chain is Cytoplasmic. The tract at residues 455 to 529 (QEAAQQAATA…FQKSESEDSI (75 aa)) is disordered. Over residues 456–466 (EAAQQAATATA) the composition is skewed to low complexity. Phosphoserine is present on Ser-470. Low complexity predominate over residues 479–492 (LSDSSSEASKLSSK). Residues 495 to 506 (KERRNRRKKRKQ) are compositionally biased toward basic residues. Basic and acidic residues predominate over residues 520-529 (FQKSESEDSI). Residues Ser-523, Ser-525, Ser-550, Ser-551, Ser-607, and Ser-730 each carry the phosphoserine modification. The tract at residues 584-627 (VGSENDFADDEHSTFEDNESRRDSLFVPRRHGERRNSNLSQTSR) is disordered. Basic and acidic residues predominate over residues 593–607 (DEHSTFEDNESRRDS). The II repeat unit spans residues 750 to 1022 (CSPYWLKVKH…QIAVDRMHKG (273 aa)). Residues 769–787 (FVDLAITICIVLNTLFMAM) traverse the membrane as a helical segment. Residues 788 to 797 (EHYPMTDHFN) lie on the Extracellular side of the membrane. The chain crosses the membrane as a helical span at residues 798–820 (NVLTVGNLVFTGIFTAEMFLKII). At 821 to 830 (AMDPYYYFQE) the chain is on the cytoplasmic side. Residues 831–849 (GWNIFDGFIVTLSLVELGL) form a helical membrane-spanning segment. The Extracellular portion of the chain corresponds to 850–854 (ANVEG). A helical transmembrane segment spans residues 855–874 (LSVLRSFRLLRVFKLAKSWP). Over 875–891 (TLNMLIKIIGNSVGALG) the chain is Cytoplasmic. The helical transmembrane segment at 892–912 (NLTLVLAIIVFIFAVVGMQLF) threads the bilayer. Topologically, residues 913–938 (GKSYKDCVCKIASDCQLPRWHMNDFF) are extracellular. A disulfide bond links Cys-921 and Cys-927. The pore-forming intramembrane region spans 939-952 (HSFLIVFRVLCGEW). Residues 953 to 965 (IETMWDCMEVAGQ) lie on the Extracellular side of the membrane. Cys-959 and Cys-968 are disulfide-bonded. Residues 966–992 (AMCLTVFMMVMVIGNLVVLNLFLALLL) form a helical membrane-spanning segment. The Cytoplasmic segment spans residues 993–1218 (SSFSADNLAA…RTCFRIVEHN (226 aa)). The segment at 1129 to 1163 (TEDFSSESDLEESKEKLNESSSSSEGSTVDIGAPV) is disordered. An III repeat occupies 1200-1514 (RGKQWWNLRR…KKYYNAMKKL (315 aa)). The chain crosses the membrane as a helical span at residues 1219–1237 (WFETFIVFMILLSSGALAF). Residues 1238-1250 (EDIYIDQRKTIKT) lie on the Extracellular side of the membrane. The chain crosses the membrane as a helical span at residues 1251-1276 (MLEYADKVFTYIFILEMLLKWVAYGY). Over 1277–1278 (QT) the chain is Cytoplasmic. The chain crosses the membrane as a helical span at residues 1279–1304 (YFTNAWCWLDFLIVDVSLVSLTANAL). The Extracellular portion of the chain corresponds to 1305–1313 (GYSELGAIK). The chain crosses the membrane as a helical span at residues 1314-1332 (SLRTLRALRPLRALSRFEG). The Cytoplasmic portion of the chain corresponds to 1333-1345 (MRVVVNALLGAIP). Residues 1346-1369 (SIMNVLLVCLIFWLIFSIMGVNLF) traverse the membrane as a helical segment. The Extracellular portion of the chain corresponds to 1370 to 1415 (AGKFYHCINTTTGDRFDIEDVNNHTDCLKLIERNETARWKNVKVNF). The cysteines at positions 1376 and 1396 are disulfide-linked. N-linked (GlcNAc...) asparagine glycans are attached at residues Asn-1378, Asn-1392, and Asn-1403. Positions 1416–1433 (DNVGFGYLSLLQVATFKG) form an intramembrane region, pore-forming. Over 1434-1457 (WMDIMYAAVDSRNVELQPKYEESL) the chain is Extracellular. A helical membrane pass occupies residues 1458-1483 (YMYLYFVIFIIFGSFFTLNLFIGVII). The Cytoplasmic segment spans residues 1484–1541 (DNFNQQKKKFGGQDIFMTEEQKKYYNAMKKLGSKKPQKPIPRPGNKFQGMVFDFVTRQ). A Phosphoserine; by PKC modification is found at Ser-1516. Residues 1523 to 1821 (IPRPGNKFQG…WEKFDPDATQ (299 aa)) form an IV repeat. The chain crosses the membrane as a helical span at residues 1542-1560 (VFDISIMILICLNMVTMMV). At 1561 to 1571 (ETDDQSEYVTT) the chain is on the extracellular side. The segment at 1561–1571 (ETDDQSEYVTT) is S1-S2 loop of repeat IV. A helical transmembrane segment spans residues 1572 to 1593 (ILSRINLVFIVLFTGECVLKLI). At 1594-1601 (SLRHYYFT) the chain is on the cytoplasmic side. Residues 1602–1623 (IGWNIFDFVVVILSIVGMFLAE) form a helical membrane-spanning segment. An S3b-S4 loop of repeat IV region spans residues 1619-1636 (MFLAELIEKYFVSPTLFR). The Extracellular segment spans residues 1624 to 1636 (LIEKYFVSPTLFR). The chain crosses the membrane as a helical span at residues 1637 to 1655 (VIRLARIGRILRLIKGAKG). Topologically, residues 1656–1665 (IRTLLFALMM) are cytoplasmic. Residues 1666–1688 (SLPALFNIGLLLFLVMFIYAIFG) traverse the membrane as a helical segment. Residues 1689–1711 (MSNFAYVKREVGIDDMFNFETFG) are Extracellular-facing. The pore-forming intramembrane region spans 1712–1726 (NSMICLFQITTSAGW). The Extracellular portion of the chain corresponds to 1727–1759 (DGLLAPILNSKPPDCDPNKVNPGSSVKGDCGNP). An intrachain disulfide couples Cys-1741 to Cys-1756. Residues 1760-1788 (SVGIFFFVSYIIISFLVVVNMYIAVILEN) traverse the membrane as a helical segment. Topologically, residues 1789 to 2009 (FSVATEESAE…EGKDEKAKGK (221 aa)) are cytoplasmic. Residues 1915 to 1944 (EEVSAVIIQRAYRRHLLKRTVKQASFTYNK) form the IQ domain. The segment at 1986–2009 (YDRVTKPIVEKHEQEGKDEKAKGK) is disordered. Residues 1988–2009 (RVTKPIVEKHEQEGKDEKAKGK) show a composition bias toward basic and acidic residues.

Belongs to the sodium channel (TC 1.A.1.10) family. Nav1.1/SCN1A subfamily. As to quaternary structure, the Nav1.1 voltage-gated sodium channel consists of an ion-conducting alpha subunit SCN1A which is functional on its own regulated by one or more beta-1 (SCN1B), beta-2 (SCN2B), beta-3 (SCN3B) and beta-4 (SCN4B) subunits. SCN1B and SCN3B are non-covalently associated with SCN1A. SCN2B and SCN4B are disulfide-linked to SCN1A. SCN1B regulates both the expression at the plasma membrane and the voltage dependence of Nav1.1 inactivation. SCN3B and SCN4B reduce Nav1.1 conductance. Probably interacts with TMEM233; modulates the gating properties of NaV1.1. Interacts with FGF13; regulates the steady-state inactivation of Nav.1.1. In terms of processing, phosphorylation at Ser-1516 by PKC in a highly conserved cytoplasmic loop slows inactivation of the sodium channel and reduces peak sodium currents.

Its subcellular location is the cell membrane. The catalysed reaction is Na(+)(in) = Na(+)(out). Its activity is regulated as follows. Activated by the spider toxins Hm1a and Hm1b (H.maculata, AC P60992 and AC P0DOC5) eliciting acute pain and mechanical allodynia. Inhibited by the conotoxin GVIIJ. Inhibited by the spider beta/delta-theraphotoxin-Pre1a. Functionally, pore-forming subunit of Nav1.1, a voltage-gated sodium (Nav) channel that directly mediates the depolarizing phase of action potentials in excitable membranes. Navs, also called VGSCs (voltage-gated sodium channels) or VDSCs (voltage-dependent sodium channels), operate by switching between closed and open conformations depending on the voltage difference across the membrane. In the open conformation they allow Na(+) ions to selectively pass through the pore, along their electrochemical gradient. The influx of Na(+) ions provokes membrane depolarization, initiating the propagation of electrical signals throughout cells and tissues. By regulating the excitability of neurons, ensures that they respond appropriately to synaptic inputs, maintaining the balance between excitation and inhibition in brain neural circuits. Nav1.1 plays a role in controlling the excitability and action potential propagation from somatosensory neurons, thereby contributing to the sensory perception of mechanically-induced pain. The polypeptide is Sodium channel protein type 1 subunit alpha (Homo sapiens (Human)).